A 355-amino-acid polypeptide reads, in one-letter code: Phenylalanine--tRNA ligase alpha subunit (355 aa).

E273 is a binding site for Mg(2+).

Belongs to the class-II aminoacyl-tRNA synthetase family. Phe-tRNA synthetase alpha subunit type 1 subfamily. As to quaternary structure, tetramer of two alpha and two beta subunits. It depends on Mg(2+) as a cofactor.

Its subcellular location is the cytoplasm. The catalysed reaction is tRNA(Phe) + L-phenylalanine + ATP = L-phenylalanyl-tRNA(Phe) + AMP + diphosphate + H(+). The polypeptide is Phenylalanine--tRNA ligase alpha subunit (Bifidobacterium longum (strain NCC 2705)).